The following is a 263-amino-acid chain: Endonuclease 8 (263 aa).

Pro-2 functions as the Schiff-base intermediate with DNA in the catalytic mechanism. Catalysis depends on Glu-3, which acts as the Proton donor. The active-site Proton donor; for beta-elimination activity is Lys-53. DNA-binding residues include Gln-70, Arg-125, and Asn-169. The FPG-type zinc finger occupies 229–263 (KVFHRDGEACERCGGIIEKTTLSSRPFYWCPHCQK). Residue Arg-253 is the Proton donor; for delta-elimination activity of the active site.

This sequence belongs to the FPG family. Requires Zn(2+) as cofactor.

The catalysed reaction is 2'-deoxyribonucleotide-(2'-deoxyribose 5'-phosphate)-2'-deoxyribonucleotide-DNA = a 3'-end 2'-deoxyribonucleotide-(2,3-dehydro-2,3-deoxyribose 5'-phosphate)-DNA + a 5'-end 5'-phospho-2'-deoxyribonucleoside-DNA + H(+). Functionally, involved in base excision repair of DNA damaged by oxidation or by mutagenic agents. Acts as a DNA glycosylase that recognizes and removes damaged bases. Has a preference for oxidized pyrimidines, such as thymine glycol, 5,6-dihydrouracil and 5,6-dihydrothymine. Has AP (apurinic/apyrimidinic) lyase activity and introduces nicks in the DNA strand. Cleaves the DNA backbone by beta-delta elimination to generate a single-strand break at the site of the removed base with both 3'- and 5'-phosphates. This Salmonella agona (strain SL483) protein is Endonuclease 8.